The sequence spans 385 residues: Cytochrome b (385 aa).

A run of 4 helical transmembrane segments spans residues 32–52 (FGSLLGLCLGIQIVTGVTLAM), 76–98 (WLVRYLHSNTASAFFFLVYLHIG), 113–133 (TWAIGTVILIVMMATAFLGYV), and 179–199 (FFALHFLLPFVLAALVIMHLI). His-82 and His-96 together coordinate heme b. Residues His-183 and His-197 each coordinate heme b. His-202 contacts a ubiquinone. 4 consecutive transmembrane segments (helical) span residues 226–246 (FVFKDLVTIFIFFIVLSIFVF), 290–310 (LLGVIAMFAAILALMVMPITD), 322–342 (LSKVAFYVFVANFLILMQIGA), and 349–369 (FIEFGQISTVLYFAHFFVIVP).

This sequence belongs to the cytochrome b family. As to quaternary structure, fungal cytochrome b-c1 complex contains 10 subunits; 3 respiratory subunits, 2 core proteins and 5 low-molecular weight proteins. Cytochrome b-c1 complex is a homodimer. Requires heme b as cofactor.

The protein resides in the mitochondrion inner membrane. In terms of biological role, component of the ubiquinol-cytochrome c reductase complex (complex III or cytochrome b-c1 complex) that is part of the mitochondrial respiratory chain. The b-c1 complex mediates electron transfer from ubiquinol to cytochrome c. Contributes to the generation of a proton gradient across the mitochondrial membrane that is then used for ATP synthesis. This chain is Cytochrome b (cob), found in Aspergillus terreus (strain NIH 2624 / FGSC A1156).